The sequence spans 195 residues: Shikimate kinase (195 aa).

Position 30–35 (G30–A35) interacts with ATP. T34 provides a ligand contact to Mg(2+). Substrate contacts are provided by D52, R76, and G98. Position 136 (R136) interacts with ATP. Position 155 (R155) interacts with substrate.

Belongs to the shikimate kinase family. Monomer. Requires Mg(2+) as cofactor.

It is found in the cytoplasm. It carries out the reaction shikimate + ATP = 3-phosphoshikimate + ADP + H(+). The protein operates within metabolic intermediate biosynthesis; chorismate biosynthesis; chorismate from D-erythrose 4-phosphate and phosphoenolpyruvate: step 5/7. In terms of biological role, catalyzes the specific phosphorylation of the 3-hydroxyl group of shikimic acid using ATP as a cosubstrate. This is Shikimate kinase from Ruegeria pomeroyi (strain ATCC 700808 / DSM 15171 / DSS-3) (Silicibacter pomeroyi).